We begin with the raw amino-acid sequence, 488 residues long: Dipeptide and tripeptide permease A (488 aa).

At 1–35 the chain is on the cytoplasmic side; the sequence is MSTANTPEDEQKPSLNAFKQPRAFYLIFSIELWER. A helical membrane pass occupies residues 36–56; that stretch reads FGYYGLQGIMAVYLVKMLGMS. Over 57–60 the chain is Periplasmic; the sequence is EAEA. Residues 61 to 81 traverse the membrane as a helical segment; it reads ITVFAAFTALVYGFVAIGGWL. The Cytoplasmic segment spans residues 82–90; sequence GDKILGTKR. The helical transmembrane segment at 91–111 threads the bilayer; it reads VIVLGAIVLAIGYAMVAFSDH. The Periplasmic portion of the chain corresponds to 112–114; sequence DKD. The chain crosses the membrane as a helical span at residues 115-135; it reads MIYWGLATIAVGNGLFKANPS. At 136–154 the chain is on the cytoplasmic side; that stretch reads SLLATCYEKDDPQLDGAFT. Residues 155 to 175 traverse the membrane as a helical segment; the sequence is MYYMSINVGSFLSMLATPWLA. Over 176-179 the chain is Periplasmic; the sequence is ANYG. A helical transmembrane segment spans residues 180-200; that stretch reads WDVAFALSVVGMLITLANFML. The Cytoplasmic portion of the chain corresponds to 201–219; that stretch reads CRGWIKDKGSRPDFEPLNY. A helical membrane pass occupies residues 220-240; the sequence is LKLLLTLVGIVALTAVSTWLL. Residue His241 is a topological domain, periplasmic. The chain crosses the membrane as a helical span at residues 242–262; it reads NNEVATWSLAIISLGIILIFA. The Cytoplasmic portion of the chain corresponds to 263–275; it reads RETFMMKGVARRK. Residues 276 to 296 form a helical membrane-spanning segment; it reads MIVAFLLMVEAVVFFVLYDQM. The Periplasmic portion of the chain corresponds to 297 to 324; sequence PTSLNFFAIHNVEHAILGFSVEPEQFQS. Residues 325–345 form a helical membrane-spanning segment; it reads LNPFWIMLASPLLAAIYNFMG. Residues 346–353 are Cytoplasmic-facing; that stretch reads DKLPMPYK. Residues 354–374 traverse the membrane as a helical segment; the sequence is FTVGMFLSATAFLVLPLGASM. Topologically, residues 375-391 are periplasmic; it reads ANEAGIVSSWWLVASYG. A helical membrane pass occupies residues 392–412; sequence FQSIGELMISGLGLAMVAQLV. At 413–415 the chain is on the cytoplasmic side; sequence PQR. A helical transmembrane segment spans residues 416–436; that stretch reads LMGFIMGAWFLTSAAAAIIAG. At 437 to 460 the chain is on the periplasmic side; it reads KVASLMAVPEDVQNAHASLEIYSS. The chain crosses the membrane as a helical span at residues 461 to 481; the sequence is VFLQIGIVTGVIALLMLFTAP. Over 482–488 the chain is Cytoplasmic; the sequence is MLSKMTQ.

Belongs to the major facilitator superfamily. Proton-dependent oligopeptide transporter (POT/PTR) (TC 2.A.17) family. DtpA subfamily.

The protein localises to the cell inner membrane. Its function is as follows. Proton-dependent permease that transports di- and tripeptides. The polypeptide is Dipeptide and tripeptide permease A (Proteus mirabilis (strain HI4320)).